Reading from the N-terminus, the 462-residue chain is Elongation factor 1-alpha (462 aa).

Gly2 carries the blocked amino end (Gly) modification. The region spanning 5 to 242 (KIHINIVVIG…DAILPPSRPT (238 aa)) is the tr-type G domain. The interval 14 to 21 (GHVDSGKS) is G1. 14-21 (GHVDSGKS) lines the GTP pocket. N6,N6,N6-trimethyllysine is present on Lys36. Position 55 is an N6-methyllysine (Lys55). Positions 70-74 (GITID) are G2. Residue Lys79 is modified to N6,N6,N6-trimethyllysine. The interval 91–94 (DAPG) is G3. Residues 91-95 (DAPGH) and 153-156 (NKMD) each bind GTP. A G4 region spans residues 153–156 (NKMD). The G5 stretch occupies residues 194-196 (SGW). N6,N6,N6-trimethyllysine occurs at positions 219 and 318. Glu374 is modified (5-glutamyl glycerylphosphorylethanolamine).

The protein belongs to the TRAFAC class translation factor GTPase superfamily. Classic translation factor GTPase family. EF-Tu/EF-1A subfamily. In terms of processing, the N-terminus is blocked.

Its subcellular location is the cytoplasm. Its function is as follows. This protein promotes the GTP-dependent binding of aminoacyl-tRNA to the A-site of ribosomes during protein biosynthesis. The polypeptide is Elongation factor 1-alpha (Artemia salina (Brine shrimp)).